The chain runs to 107 residues: Thioredoxin (107 aa).

The Thioredoxin domain maps to 2–107 (SVSQVTDASF…LASTLNKYIS (106 aa)). Catalysis depends on nucleophile residues cysteine 31 and cysteine 34. Residues cysteine 31 and cysteine 34 are joined by a disulfide bond.

It belongs to the thioredoxin family.

Its subcellular location is the plastid. The protein resides in the chloroplast. Functionally, participates in various redox reactions through the reversible oxidation of its active center dithiol to a disulfide and catalyzes dithiol-disulfide exchange reactions. The protein is Thioredoxin (trxA) of Pyropia yezoensis (Susabi-nori).